A 389-amino-acid polypeptide reads, in one-letter code: Type 2 DNA topoisomerase 6 subunit A (389 aa).

One can recognise a Topo IIA-type catalytic domain in the interval 13 to 161; the sequence is KARLRAAEVM…MLILSKEKGK (149 aa). Tyrosine 107 acts as the O-(5'-phospho-DNA)-tyrosine intermediate in catalysis. Mg(2+) contacts are provided by glutamate 208 and aspartate 260.

Belongs to the TOP6A family. In terms of assembly, homodimer. Heterotetramer of two Top6A and two Top6B chains. It depends on Mg(2+) as a cofactor.

It carries out the reaction ATP-dependent breakage, passage and rejoining of double-stranded DNA.. Its function is as follows. Relaxes both positive and negative superturns and exhibits a strong decatenase activity. The chain is Type 2 DNA topoisomerase 6 subunit A from Aeropyrum pernix (strain ATCC 700893 / DSM 11879 / JCM 9820 / NBRC 100138 / K1).